A 198-amino-acid polypeptide reads, in one-letter code: Ribonuclease HII 1 (198 aa).

Residues 7–196 enclose the RNase H type-2 domain; that stretch reads ELTAGVDEAG…VRAALARAAA (190 aa). A divalent metal cation contacts are provided by D13, E14, and D105.

Belongs to the RNase HII family. Mn(2+) is required as a cofactor. Mg(2+) serves as cofactor.

The protein localises to the cytoplasm. It carries out the reaction Endonucleolytic cleavage to 5'-phosphomonoester.. In terms of biological role, endonuclease that specifically degrades the RNA of RNA-DNA hybrids. The polypeptide is Ribonuclease HII 1 (Methylibium petroleiphilum (strain ATCC BAA-1232 / LMG 22953 / PM1)).